Here is a 377-residue protein sequence, read N- to C-terminus: uncharacterized protein (377 aa).

The interval 345 to 377 is disordered; the sequence is VGPSPPAYEQVARSSPTDIPLPPPSCPTNVQRD.

This is an uncharacterized protein from Schizosaccharomyces pombe (strain 972 / ATCC 24843) (Fission yeast).